Here is a 168-residue protein sequence, read N- to C-terminus: ATP synthase subunit b (168 aa).

The helical transmembrane segment at 9–29 (AIPFGTIAYTLFIFLLLLVML) threads the bilayer.

The protein belongs to the ATPase B chain family. As to quaternary structure, F-type ATPases have 2 components, F(1) - the catalytic core - and F(0) - the membrane proton channel. F(1) has five subunits: alpha(3), beta(3), gamma(1), delta(1), epsilon(1). F(0) has three main subunits: a(1), b(2) and c(10-14). The alpha and beta chains form an alternating ring which encloses part of the gamma chain. F(1) is attached to F(0) by a central stalk formed by the gamma and epsilon chains, while a peripheral stalk is formed by the delta and b chains.

It is found in the cell membrane. Its function is as follows. F(1)F(0) ATP synthase produces ATP from ADP in the presence of a proton or sodium gradient. F-type ATPases consist of two structural domains, F(1) containing the extramembraneous catalytic core and F(0) containing the membrane proton channel, linked together by a central stalk and a peripheral stalk. During catalysis, ATP synthesis in the catalytic domain of F(1) is coupled via a rotary mechanism of the central stalk subunits to proton translocation. Component of the F(0) channel, it forms part of the peripheral stalk, linking F(1) to F(0). In Bacillus thuringiensis (strain Al Hakam), this protein is ATP synthase subunit b.